Reading from the N-terminus, the 64-residue chain is Large ribosomal subunit protein uL29 (64 aa).

The protein belongs to the universal ribosomal protein uL29 family.

The polypeptide is Large ribosomal subunit protein uL29 (Thiobacillus denitrificans (strain ATCC 25259 / T1)).